Here is a 204-residue protein sequence, read N- to C-terminus: Octanoyltransferase (204 aa).

The BPL/LPL catalytic domain occupies 27–202; that stretch reads QGGEEALLLL…RFQPFLHLHL (176 aa). Substrate is bound by residues 65–72, 132–134, and 145–147; these read RGGDVTYH, SIG, and GFA. Cysteine 163 (acyl-thioester intermediate) is an active-site residue.

It belongs to the LipB family.

The protein resides in the cytoplasm. The catalysed reaction is octanoyl-[ACP] + L-lysyl-[protein] = N(6)-octanoyl-L-lysyl-[protein] + holo-[ACP] + H(+). The protein operates within protein modification; protein lipoylation via endogenous pathway; protein N(6)-(lipoyl)lysine from octanoyl-[acyl-carrier-protein]: step 1/2. In terms of biological role, catalyzes the transfer of endogenously produced octanoic acid from octanoyl-acyl-carrier-protein onto the lipoyl domains of lipoate-dependent enzymes. Lipoyl-ACP can also act as a substrate although octanoyl-ACP is likely to be the physiological substrate. The protein is Octanoyltransferase of Geobacter sp. (strain M21).